Here is a 361-residue protein sequence, read N- to C-terminus: Histidinol-phosphate aminotransferase (361 aa).

Residues 26–45 form a disordered region; it reads GMDPEDLTKLSSNENPHGPS. Lys222 carries the post-translational modification N6-(pyridoxal phosphate)lysine.

The protein belongs to the class-II pyridoxal-phosphate-dependent aminotransferase family. Histidinol-phosphate aminotransferase subfamily. Requires pyridoxal 5'-phosphate as cofactor.

The catalysed reaction is L-histidinol phosphate + 2-oxoglutarate = 3-(imidazol-4-yl)-2-oxopropyl phosphate + L-glutamate. It participates in amino-acid biosynthesis; L-histidine biosynthesis; L-histidine from 5-phospho-alpha-D-ribose 1-diphosphate: step 7/9. The protein is Histidinol-phosphate aminotransferase (hisC) of Haloferax volcanii (strain ATCC 29605 / DSM 3757 / JCM 8879 / NBRC 14742 / NCIMB 2012 / VKM B-1768 / DS2) (Halobacterium volcanii).